The chain runs to 373 residues: Cytoplasmic envelopment protein 2 (373 aa).

A disordered region spans residues 1–35 (MAQLGPRRPLAPPGPPGTLPRPDSRAGARGTRDRV). Pro residues predominate over residues 9–19 (PLAPPGPPGTL). The segment covering 22 to 35 (PDSRAGARGTRDRV) has biased composition (basic and acidic residues).

This sequence belongs to the herpesviridae cytoplasmic envelopment protein 2 family. Interacts with cytoplasmic envelopment protein 3 and with the capsid.

It is found in the virion tegument. The protein resides in the host cytoplasm. Its subcellular location is the host nucleus. Plays a critical role in cytoplasmic virus egress. Participates in the final step of tegumentation and envelope acquisition within the host cytoplasm by directly interacting with the capsid. Upon virion binding to target cell, a signaling cascade is triggered to disrupt the interaction with the capsid, thereby preparing capsid uncoating. In Homo sapiens (Human), this protein is Cytoplasmic envelopment protein 2 (UL16).